Here is a 131-residue protein sequence, read N- to C-terminus: Phosphoribosyl-AMP cyclohydrolase (131 aa).

Mg(2+) is bound at residue aspartate 78. Cysteine 79 lines the Zn(2+) pocket. The Mg(2+) site is built by aspartate 80 and aspartate 82. Zn(2+) is bound by residues cysteine 96 and cysteine 103.

It belongs to the PRA-CH family. As to quaternary structure, homodimer. It depends on Mg(2+) as a cofactor. Requires Zn(2+) as cofactor.

Its subcellular location is the cytoplasm. It catalyses the reaction 1-(5-phospho-beta-D-ribosyl)-5'-AMP + H2O = 1-(5-phospho-beta-D-ribosyl)-5-[(5-phospho-beta-D-ribosylamino)methylideneamino]imidazole-4-carboxamide. It functions in the pathway amino-acid biosynthesis; L-histidine biosynthesis; L-histidine from 5-phospho-alpha-D-ribose 1-diphosphate: step 3/9. Catalyzes the hydrolysis of the adenine ring of phosphoribosyl-AMP. The protein is Phosphoribosyl-AMP cyclohydrolase of Neisseria meningitidis serogroup C / serotype 2a (strain ATCC 700532 / DSM 15464 / FAM18).